Here is a 182-residue protein sequence, read N- to C-terminus: Adenine phosphoribosyltransferase (182 aa).

This sequence belongs to the purine/pyrimidine phosphoribosyltransferase family. Homodimer.

It is found in the cytoplasm. The enzyme catalyses AMP + diphosphate = 5-phospho-alpha-D-ribose 1-diphosphate + adenine. The protein operates within purine metabolism; AMP biosynthesis via salvage pathway; AMP from adenine: step 1/1. In terms of biological role, catalyzes a salvage reaction resulting in the formation of AMP, that is energically less costly than de novo synthesis. This is Adenine phosphoribosyltransferase from Streptomyces galbus.